We begin with the raw amino-acid sequence, 314 residues long: NF-kappa-B inhibitor alpha (314 aa).

Residues 1–40 (MFQPAGHGQDWAMEGPRDGLKKERLVDDRHDSGLDSMKDE) form a disordered region. Residues 15–40 (GPRDGLKKERLVDDRHDSGLDSMKDE) show a composition bias toward basic and acidic residues. K21 is covalently cross-linked (Glycyl lysine isopeptide (Lys-Gly) (interchain with G-Cter in SUMO); alternate). A Glycyl lysine isopeptide (Lys-Gly) (interchain with G-Cter in ubiquitin); alternate cross-link involves residue K21. K22 participates in a covalent cross-link: Glycyl lysine isopeptide (Lys-Gly) (interchain with G-Cter in ubiquitin). The Destruction motif motif lies at 30 to 36 (HDSGLDS). S32 is subject to Phosphoserine; by IKKB. S36 is subject to Phosphoserine; by IKKA, IKKB, IKKE and TBK1. Phosphotyrosine is present on Y42. A Nuclear export signal motif is present at residues 45–54 (MVKELREIRL). ANK repeat units follow at residues 73–103 (DGDSFLHLAIIHEEKPLTMEVIGQVKGDLAF), 110–139 (LQQTPLHLAVITNQPGIAEALLKAGCDPEL), 143–172 (RGNTPLHLACEQGCLASVAVLTQTCTPQHL), 182–211 (NGHTCLHLASIHGYLAIVEHLVTLGADVNA), and 216–245 (NGRTALHLAVDLQNPDLVSLLLKCGADVNR). The short motif at 110–120 (LQQTPLHLAVI) is the Nuclear import signal element. A (3S)-3-hydroxyasparagine; by HIF1AN mark is found at N210 and N244. 2 positions are modified to phosphoserine; by CK2: S283 and S288. Position 291 is a phosphothreonine; by CK2 (T291). A Phosphoserine; by CK2 modification is found at S293. T296 bears the Phosphothreonine mark.

The protein belongs to the NF-kappa-B inhibitor family. As to quaternary structure, interacts with RELA; the interaction requires the nuclear import signal. Part of a 70-90 kDa complex at least consisting of CHUK, IKBKB, NFKBIA, RELA, ELP1 and MAP3K14. Interacts with NKIRAS1 and NKIRAS2. Interacts with RWDD3; the interaction enhances sumoylation. Interacts with PRMT2. Interacts with PRKACA in platelets; this interaction is disrupted by thrombin and collagen. Interacts with MEFV. Interacts with DDRGK1; positively regulates NFKBIA phosphorylation and degradation. Interacts with HNRNPA2B1; the interaction may be mediated by the RRM2 domain of HNRNPA2B1, and HNRNPA2B1 may interact simultaneously with FAM76B and either NFKBIA or NFKBIE to form a complex. In terms of processing, phosphorylated at Ser-32 and Ser-36 by IKKA/CHUK and IKKB/IKBKB; disables inhibition of NF-kappa-B DNA-binding activity. Phosphorylation at positions 32 and 36 is prerequisite to recognition by the SCF(FBXW11) and SCF(BTRC) complexes, leading to polyubiquitination and subsequent degradation. Post-translationally, polyubiquitinated at Lys-21 and/or Lys-22 following phosphorylation at Ser-32 and Ser-36. Monoubiquitinated at Lys-21 and/or Lys-22 by UBE2D3. Ubiquitin chain elongation is then performed by CDC34 in cooperation with the SCF(FBXW11) E3 ligase complex, building ubiquitin chains from the UBE2D3-primed NFKBIA-linked ubiquitin. The resulting polyubiquitination leads to protein degradation. Also ubiquitinated by the SCF(BTRC) complex following stimulus-dependent phosphorylation at Ser-32 and Ser-36. Deubiquitinated by USP38, leading to NF-kappa-B inhibition. Sumoylated; sumoylation requires the presence of the nuclear import signal. Sumoylation blocks ubiquitination and proteasome-mediated degradation of the protein thereby increasing the protein stability. In terms of processing, hydroxylated by HIF1AN. In terms of tissue distribution, highly expressed in lymph node, thymus followed by liver, brain, muscle, kidney, gastrointestinal and reproductive tract.

It localises to the cytoplasm. It is found in the nucleus. Functionally, inhibits the activity of dimeric NF-kappa-B/REL complexes by trapping REL (RELA/p65 and NFKB1/p50) dimers in the cytoplasm by masking their nuclear localization signals. On cellular stimulation by immune and pro-inflammatory responses, becomes phosphorylated promoting ubiquitination and degradation, enabling the dimeric RELA to translocate to the nucleus and activate transcription. This is NF-kappa-B inhibitor alpha (Nfkbia) from Mus musculus (Mouse).